Here is an 87-residue protein sequence, read N- to C-terminus: Ribonuclease P protein component 1 (87 aa).

It belongs to the eukaryotic/archaeal RNase P protein component 1 family. In terms of assembly, consists of a catalytic RNA component and at least 4-5 protein subunits.

It localises to the cytoplasm. It catalyses the reaction Endonucleolytic cleavage of RNA, removing 5'-extranucleotides from tRNA precursor.. Functionally, part of ribonuclease P, a protein complex that generates mature tRNA molecules by cleaving their 5'-ends. This chain is Ribonuclease P protein component 1, found in Thermoplasma acidophilum (strain ATCC 25905 / DSM 1728 / JCM 9062 / NBRC 15155 / AMRC-C165).